Here is a 254-residue protein sequence, read N- to C-terminus: uncharacterized protein (254 aa).

Residues aspartate 66 to alanine 111 adopt a coiled-coil conformation.

This is an uncharacterized protein from Ostreid herpesvirus 1 (isolate France) (OsHV-1).